We begin with the raw amino-acid sequence, 313 residues long: Nodulation protein D 3 (313 aa).

In terms of domain architecture, HTH lysR-type spans 6–63; that stretch reads LDLNLLVALDALMTKRSVTAAARSINLSQPAMSSAIARLRSYFQDELFRMQGRELITT. The H-T-H motif DNA-binding region spans 23-42; it reads VTAAARSINLSQPAMSSAIA.

This sequence belongs to the LysR transcriptional regulatory family.

NodD regulates the expression of the nodABCFE genes which encode other nodulation proteins. NodD is also a negative regulator of its own expression. Binds flavonoids as inducers. The polypeptide is Nodulation protein D 3 (nodD3) (Rhizobium meliloti (strain 1021) (Ensifer meliloti)).